Reading from the N-terminus, the 567-residue chain is DNA ligase B (567 aa).

Residue Lys-126 is the N6-AMP-lysine intermediate of the active site.

It belongs to the NAD-dependent DNA ligase family. LigB subfamily.

It catalyses the reaction NAD(+) + (deoxyribonucleotide)n-3'-hydroxyl + 5'-phospho-(deoxyribonucleotide)m = (deoxyribonucleotide)n+m + AMP + beta-nicotinamide D-nucleotide.. Catalyzes the formation of phosphodiester linkages between 5'-phosphoryl and 3'-hydroxyl groups in double-stranded DNA using NAD as a coenzyme and as the energy source for the reaction. This is DNA ligase B from Pseudomonas putida (strain W619).